Here is a 431-residue protein sequence, read N- to C-terminus: Tyrosine--tRNA ligase (431 aa).

L-tyrosine is bound at residue Y33. The 'HIGH' region signature appears at 38–47 (PTADSLHIGS). Y172 and Q176 together coordinate L-tyrosine. The 'KMSKS' region motif lies at 234–238 (KFGKS). K237 is a binding site for ATP. An S4 RNA-binding domain is found at 364–431 (INIVEVLNEK…KKNYFVLNVK (68 aa)).

This sequence belongs to the class-I aminoacyl-tRNA synthetase family. TyrS type 1 subfamily. Homodimer.

Its subcellular location is the cytoplasm. It catalyses the reaction tRNA(Tyr) + L-tyrosine + ATP = L-tyrosyl-tRNA(Tyr) + AMP + diphosphate + H(+). Catalyzes the attachment of tyrosine to tRNA(Tyr) in a two-step reaction: tyrosine is first activated by ATP to form Tyr-AMP and then transferred to the acceptor end of tRNA(Tyr). In Flavobacterium psychrophilum (strain ATCC 49511 / DSM 21280 / CIP 103535 / JIP02/86), this protein is Tyrosine--tRNA ligase.